An 840-amino-acid chain; its full sequence is Phosphatidylinositol-glycan-specific phospholipase D (840 aa).

The first 23 residues, 1 to 23, serve as a signal peptide directing secretion; that stretch reads MSAFRLWPGLLIMLGSLCHRGSP. N-linked (GlcNAc...) asparagine glycosylation is found at Asn-94, Asn-271, Asn-292, Asn-307, and Asn-321. 7 FG-GAP repeats span residues 367-428, 436-497, 499-559, 563-623, 633-693, 704-770, and 788-840; these read SPLA…GLPP, EAHR…GGMS, SPNI…LSDK, NVEA…SLGR, QSWF…GATR, LLLS…TLGD, and QYVL…LGSD. 5 N-linked (GlcNAc...) asparagine glycosylation sites follow: Asn-501, Asn-568, Asn-591, Asn-604, and Asn-659.

Belongs to the GPLD1 family. In terms of assembly, monomer.

Its subcellular location is the secreted. It catalyses the reaction a 6-(alpha-D-glucosaminyl)-1-(1,2-diacyl-sn-glycero-3-phospho)-1D-myo-inositol + H2O = 6-(alpha-D-glucosaminyl)-1D-myo-inositol + a 1,2-diacyl-sn-glycero-3-phosphate + H(+). Its function is as follows. This protein hydrolyzes the inositol phosphate linkage in proteins anchored by phosphatidylinositol glycans (GPI-anchor) thus releasing these proteins from the membrane. The chain is Phosphatidylinositol-glycan-specific phospholipase D (GPLD1) from Homo sapiens (Human).